A 933-amino-acid chain; its full sequence is Potassium voltage-gated channel subfamily KQT member 5 (933 aa).

The Cytoplasmic segment spans residues M1–W126. S89 is subject to Phosphoserine. A helical membrane pass occupies residues A127–F147. Residues S148 to A157 are Extracellular-facing. A helical transmembrane segment spans residues S158 to I178. At R179–K201 the chain is on the cytoplasmic side. Residues P202–T222 traverse the membrane as a helical segment. At Q223–S230 the chain is on the extracellular side. Residues A231 to W253 form a helical; Voltage-sensor membrane-spanning segment. Positions 249 and 265 each coordinate a 1,2-diacyl-sn-glycero-3-phospho-(1D-myo-inositol-4,5-bisphosphate). Topologically, residues K254–L267 are cytoplasmic. A helical transmembrane segment spans residues I268–V288. The Extracellular segment spans residues E289 to Y299. An intramembrane region (pore-forming) is located at residues A300–P320. The Extracellular portion of the chain corresponds to L321–R326. The chain crosses the membrane as a helical span at residues L327–L347. Topologically, residues G348 to N933 are cytoplasmic. Position 362 (K362) interacts with a 1,2-diacyl-sn-glycero-3-phospho-(1D-myo-inositol-4,5-bisphosphate). Positions A371 to W379 are interaction with CALM. The tract at residues S405 to S465 is disordered. The segment covering R432–A441 has biased composition (polar residues). The residue at position 448 (S448) is a Phosphoserine. The interaction with CALM stretch occupies residues V522–M529. Residues K578–T598 form a disordered region. Basic and acidic residues predominate over residues S583 to T598. The residue at position 832 (S832) is a Phosphoserine. The disordered stretch occupies residues G878–N933. Over residues S900–A924 the composition is skewed to polar residues.

It belongs to the potassium channel family. KQT (TC 1.A.1.15) subfamily. Kv7.5/KCNQ5 sub-subfamily. Homotetramer; forms a functional homotetrameric channel resulting in the expression of a small M-current. Heterotetramer with KCNQ3; forms heterotetrameric M-channel responsible for the native M-current. Heterotetramer with KCNQ1; forms a functional voltage-gated potassium channel. Interacts (via C-terminus) with calmodulin/CALM; forms a heterooctameric structure (with 4:4 KCNQ1:CALM stoichiometry); the interaction is calcium-independent, constitutive and participates in the channel function. As to expression, strongly expressed in brain. Also expressed in colon, lung and uterus.

Its subcellular location is the cell membrane. The enzyme catalyses K(+)(in) = K(+)(out). Phosphatidylinositol-4,5-bisphosphate (PIP2) is essential to activate KCNQ5 channel by inducing the coupling of the voltage-sensing domain (VSD) and the pore-forming domain (PD). Calcium suppresses KCNQ5 channel current through calcium-bound CALM C-terminus. Therefore CALM acts as calcium sensor that controls channel activity. Zinc potentiates channel activity in a pH-dependent manner. The activity is modulated by small changes in cell volume. Activated by the anticonvulsant retigabine. Inhibited by linopirdine and XE991. Functionally, pore-forming subunit of the voltage-gated potassium (Kv) channel broadly expressed in brain and skeletal muscle and involved in the regulation of neuronal excitability. Associates with KCNQ3/Kv7.3 pore-forming subunit to form a potassium channel which contributes to M-type current, a slowly activating and deactivating potassium conductance which plays a critical role in determining the subthreshold electrical excitability of neurons. Contributes, with other potassium channels, to the molecular diversity of a heterogeneous population of M-channels, varying in kinetic and pharmacological properties, which underlie this physiologically important current. Also forms a functional channel with KCNQ1/Kv7.1 subunit that may contribute to vasoconstriction and hypertension. Channel may be selectively permeable in vitro to other cations besides potassium, in decreasing order of affinity K(+) = Rb(+) &gt; Cs(+) &gt; Na(+). This Mus musculus (Mouse) protein is Potassium voltage-gated channel subfamily KQT member 5.